We begin with the raw amino-acid sequence, 390 residues long: Zinc transporter 7 (390 aa).

At 1–37 (MLPLSIKDDEYKPPKFNLVRKVSGWIRSIFSDTTSRN) the chain is on the cytoplasmic side. The chain crosses the membrane as a helical span at residues 38 to 58 (LFCFLCLNLSFAFVELFYGIW). Residues 59–67 (SNSLGLISD) lie on the Lumenal side of the membrane. The helical transmembrane segment at 68–88 (SFHMFFDCTALLAGLAASVIS) threads the bilayer. Over 89 to 102 (RWKTNEAFSYGYVR) the chain is Cytoplasmic. Residues 103–123 (AEVLAGFVNGLFLIFTAFFIF) form a helical membrane-spanning segment. Residues 124-140 (SEGIERALDTPEVHHER) lie on the Lumenal side of the membrane. A helical transmembrane segment spans residues 141–161 (LLPVSILGFLVNLIGIFVFQH). The interval 161–226 (HGGGHGHSHE…SHDQSHKHGH (66 aa)) is his-rich loop. The Cytoplasmic segment spans residues 162–250 (GGGHGHSHES…TGSSKQILEG (89 aa)). Residues 167-243 (HSHESGHGHS…DEPPEEHTGS (77 aa)) form a disordered region. Low complexity predominate over residues 177–186 (HSLFNGSLSH). Residues 187–208 (GHSHSHGGSHGHSHGGGHGHSH) are compositionally biased toward basic residues. Basic and acidic residues-rich tracts occupy residues 209–222 (SHGE…DQSH) and 232–242 (CHDEPPEEHTG). A helical transmembrane segment spans residues 251–271 (VFLHIVADALGSVGVIISTIL). At 272-276 (MQRYG) the chain is on the lumenal side. Residues 277–297 (LMIADPICSMLIALLIFVSVI) traverse the membrane as a helical segment. At 298 to 390 (PLLKQSIGIL…LYVQIDMAAM (93 aa)) the chain is on the cytoplasmic side.

It belongs to the cation diffusion facilitator (CDF) transporter (TC 2.A.4) family. SLC30A subfamily. As to quaternary structure, homooligomer.

The protein resides in the golgi apparatus membrane. Its subcellular location is the cytoplasmic vesicle. It localises to the golgi apparatus. It is found in the trans-Golgi network. The protein localises to the sarcoplasmic reticulum. The protein resides in the mitochondrion. It catalyses the reaction Zn(2+)(in) = Zn(2+)(out). Functionally, zinc ion transporter mediating zinc entry from the cytosol into the lumen of organelles along the secretory pathway. By contributing to zinc ion homeostasis within the early secretory pathway, regulates the activation and folding of enzymes like alkaline phosphatases. This Xenopus tropicalis (Western clawed frog) protein is Zinc transporter 7 (slc30a7).